Here is a 253-residue protein sequence, read N- to C-terminus: Triosephosphate isomerase (253 aa).

13-15 (NWK) contributes to the substrate binding site. Residue H100 is the Electrophile of the active site. E169 (proton acceptor) is an active-site residue. Substrate is bound by residues G175, S208, and 229 to 230 (GG).

This sequence belongs to the triosephosphate isomerase family. In terms of assembly, homodimer.

It is found in the cytoplasm. The enzyme catalyses D-glyceraldehyde 3-phosphate = dihydroxyacetone phosphate. The protein operates within carbohydrate biosynthesis; gluconeogenesis. It functions in the pathway carbohydrate degradation; glycolysis; D-glyceraldehyde 3-phosphate from glycerone phosphate: step 1/1. Functionally, involved in the gluconeogenesis. Catalyzes stereospecifically the conversion of dihydroxyacetone phosphate (DHAP) to D-glyceraldehyde-3-phosphate (G3P). The polypeptide is Triosephosphate isomerase (Synechococcus sp. (strain RCC307)).